The following is a 210-amino-acid chain: ATP-dependent dethiobiotin synthetase BioD (210 aa).

13–18 is an ATP binding site; it reads DVGKTV. Residue T17 coordinates Mg(2+). K33 is a catalytic residue. The Mg(2+) site is built by R47 and E101. ATP contacts are provided by residues 101–104 and 185–187; these read EGAG and PPL.

This sequence belongs to the dethiobiotin synthetase family. As to quaternary structure, homodimer. The cofactor is Mg(2+).

It is found in the cytoplasm. It catalyses the reaction (7R,8S)-7,8-diammoniononanoate + CO2 + ATP = (4R,5S)-dethiobiotin + ADP + phosphate + 3 H(+). The protein operates within cofactor biosynthesis; biotin biosynthesis; biotin from 7,8-diaminononanoate: step 1/2. Functionally, catalyzes a mechanistically unusual reaction, the ATP-dependent insertion of CO2 between the N7 and N8 nitrogen atoms of 7,8-diaminopelargonic acid (DAPA, also called 7,8-diammoniononanoate) to form a ureido ring. The sequence is that of ATP-dependent dethiobiotin synthetase BioD from Afipia carboxidovorans (strain ATCC 49405 / DSM 1227 / KCTC 32145 / OM5) (Oligotropha carboxidovorans).